We begin with the raw amino-acid sequence, 344 residues long: S-adenosylmethionine:tRNA ribosyltransferase-isomerase (344 aa).

The protein belongs to the QueA family. As to quaternary structure, monomer.

The protein resides in the cytoplasm. It carries out the reaction 7-aminomethyl-7-carbaguanosine(34) in tRNA + S-adenosyl-L-methionine = epoxyqueuosine(34) in tRNA + adenine + L-methionine + 2 H(+). It participates in tRNA modification; tRNA-queuosine biosynthesis. Transfers and isomerizes the ribose moiety from AdoMet to the 7-aminomethyl group of 7-deazaguanine (preQ1-tRNA) to give epoxyqueuosine (oQ-tRNA). The polypeptide is S-adenosylmethionine:tRNA ribosyltransferase-isomerase (Nitrosococcus oceani (strain ATCC 19707 / BCRC 17464 / JCM 30415 / NCIMB 11848 / C-107)).